Consider the following 119-residue polypeptide: Protein TusC (119 aa).

This sequence belongs to the DsrF/TusC family. As to quaternary structure, heterohexamer, formed by a dimer of trimers. The hexameric TusBCD complex contains 2 copies each of TusB, TusC and TusD. The TusBCD complex interacts with TusE.

The protein localises to the cytoplasm. Its function is as follows. Part of a sulfur-relay system required for 2-thiolation of 5-methylaminomethyl-2-thiouridine (mnm(5)s(2)U) at tRNA wobble positions. This Klebsiella pneumoniae (strain 342) protein is Protein TusC.